A 216-amino-acid chain; its full sequence is Proenkephalin-A-B (216 aa).

5 consecutive propeptides follow at residues 64–85, 93–131, 144–155, 165–175, and 183–207; these read MDEL…LAKN, EYDS…GEMN, STDLEDETRGIQ, VGRPEWWQDYQ, and TRFT…PDME. Residues 114-133 form a disordered region; the sequence is PESAIYHDNNSETPGEMNKR.

This sequence belongs to the opioid neuropeptide precursor family. Post-translationally, the N-terminal domain contains 6 conserved cysteines thought to be involved in disulfide bonding and/or processing.

Its subcellular location is the secreted. Its function is as follows. Enkephalin neuropeptides compete with and mimic the effects of opiate drugs. They play a role in a number of physiologic functions, including pain perception and responses to stress. This chain is Proenkephalin-A-B (penk-b), found in Xenopus laevis (African clawed frog).